Here is a 57-residue protein sequence, read N- to C-terminus: UPF0391 membrane protein RPA3029 (57 aa).

2 helical membrane-spanning segments follow: residues 6–26 (WALI…TGIS) and 35–55 (ILFY…FTIF).

This sequence belongs to the UPF0391 family.

It localises to the cell membrane. This chain is UPF0391 membrane protein RPA3029, found in Rhodopseudomonas palustris (strain ATCC BAA-98 / CGA009).